Here is a 235-residue protein sequence, read N- to C-terminus: Ubiquinone/menaquinone biosynthesis C-methyltransferase UbiE (235 aa).

S-adenosyl-L-methionine contacts are provided by residues threonine 60, aspartate 80, 106–107 (DV), and serine 123.

It belongs to the class I-like SAM-binding methyltransferase superfamily. MenG/UbiE family.

The catalysed reaction is a 2-demethylmenaquinol + S-adenosyl-L-methionine = a menaquinol + S-adenosyl-L-homocysteine + H(+). It catalyses the reaction a 2-methoxy-6-(all-trans-polyprenyl)benzene-1,4-diol + S-adenosyl-L-methionine = a 5-methoxy-2-methyl-3-(all-trans-polyprenyl)benzene-1,4-diol + S-adenosyl-L-homocysteine + H(+). The protein operates within quinol/quinone metabolism; menaquinone biosynthesis; menaquinol from 1,4-dihydroxy-2-naphthoate: step 2/2. It participates in cofactor biosynthesis; ubiquinone biosynthesis. Functionally, methyltransferase required for the conversion of demethylmenaquinol (DMKH2) to menaquinol (MKH2) and the conversion of 2-polyprenyl-6-methoxy-1,4-benzoquinol (DDMQH2) to 2-polyprenyl-3-methyl-6-methoxy-1,4-benzoquinol (DMQH2). This Bdellovibrio bacteriovorus (strain ATCC 15356 / DSM 50701 / NCIMB 9529 / HD100) protein is Ubiquinone/menaquinone biosynthesis C-methyltransferase UbiE.